Reading from the N-terminus, the 1252-residue chain is DNA-directed RNA polymerase subunit beta (1252 aa).

This sequence belongs to the RNA polymerase beta chain family. As to quaternary structure, the RNAP catalytic core consists of 2 alpha, 1 beta, 1 beta' and 1 omega subunit. When a sigma factor is associated with the core the holoenzyme is formed, which can initiate transcription.

It carries out the reaction RNA(n) + a ribonucleoside 5'-triphosphate = RNA(n+1) + diphosphate. Functionally, DNA-dependent RNA polymerase catalyzes the transcription of DNA into RNA using the four ribonucleoside triphosphates as substrates. This Chlamydia pneumoniae (Chlamydophila pneumoniae) protein is DNA-directed RNA polymerase subunit beta.